Here is a 192-residue protein sequence, read N- to C-terminus: MITISEAAQAHFVKLLSDQPEGTHIRVFVISPGTAQAECGVSYCPPDAVEADDTEIEFNGFNAMVDEKSAPFLEEATIDFVTDQLGSQLTLKAPNAKMRKVSDDASLSERIEYVIQSEINPQLASHGGNIMLVEITEDGIAVLQFGGGCNGCSMVDVTLKDGIEKQLLDMFPGELSGVKDVTEHQHGEHSYQ.

2 residues coordinate [4Fe-4S] cluster: cysteine 149 and cysteine 152.

The protein belongs to the NfuA family. In terms of assembly, homodimer. [4Fe-4S] cluster is required as a cofactor.

Functionally, involved in iron-sulfur cluster biogenesis. Binds a 4Fe-4S cluster, can transfer this cluster to apoproteins, and thereby intervenes in the maturation of Fe/S proteins. Could also act as a scaffold/chaperone for damaged Fe/S proteins. This Shewanella pealeana (strain ATCC 700345 / ANG-SQ1) protein is Fe/S biogenesis protein NfuA.